The chain runs to 377 residues: Putative efflux system component YknX (377 aa).

A helical transmembrane segment spans residues 3–23 (KVWIGIGIAVIVALFVGINIY). A coiled-coil region spans residues 95–187 (TNEQLSLEKE…RVSDLEVKSE (93 aa)).

This sequence belongs to the membrane fusion protein (MFP) (TC 8.A.1) family. Part of a complex composed of YknX, YknY and YknZ. The complex interacts with YknW.

Its subcellular location is the cell membrane. Its function is as follows. Part of an unusual four-component transporter, which is required for protection against the killing factor SdpC (sporulation-delaying protein). The protein is Putative efflux system component YknX (yknX) of Bacillus subtilis (strain 168).